A 289-amino-acid polypeptide reads, in one-letter code: MAETTASGYIQHHLQNLTFGQLPNGGWGFAHTAAEAKEMGFWAFHVDTLGWSVALGLIFVLLFRMAAKKATSGQPGALQNFVEVLVEFVDGSVKDSFHGRSPVIAPLALTIFVWVFLMNAVDLVPVDWVPQLAILISGDHHIPFRAVSTTDPNATLGMAFSVFALIIFYSIKVKGLGGFIGELTLHPFGSKNIFVQALLIPVNFLLEFVTLIAKPISLALRLFGNMYAGELVFILIAVMFGSGLLWLSGLGVVLQWAWAVFHILIITLQAFIFMMLTIVYLSMAHEENH.

A run of 6 helical transmembrane segments spans residues Ala43–Phe63, Val103–Leu123, Phe160–Ile180, Ile193–Ala213, Val232–Val252, and Ala259–Val279.

Belongs to the ATPase A chain family. In terms of assembly, F-type ATPases have 2 components, CF(1) - the catalytic core - and CF(0) - the membrane proton channel. CF(1) has five subunits: alpha(3), beta(3), gamma(1), delta(1), epsilon(1). CF(0) has three main subunits: a(1), b(2) and c(9-12). The alpha and beta chains form an alternating ring which encloses part of the gamma chain. CF(1) is attached to CF(0) by a central stalk formed by the gamma and epsilon chains, while a peripheral stalk is formed by the delta and b chains.

The protein localises to the cell inner membrane. Functionally, key component of the proton channel; it plays a direct role in the translocation of protons across the membrane. In Pseudomonas fluorescens (strain Pf0-1), this protein is ATP synthase subunit a.